We begin with the raw amino-acid sequence, 1476 residues long: Copper-transporting ATPase 1 (1476 aa).

Residues 1–642 (MEPSMDVNSV…HKREIKQWRS (642 aa)) are Cytoplasmic-facing. HMA domains follow at residues 8–74 (NSVT…FDAL) and 85–151 (TDTL…LETG). Residues Thr18, Cys19, and Cys22 each contribute to the Cu(+) site. Thr152 carries the phosphothreonine modification. HMA domains are found at residues 171–237 (VVLK…FPAF) and 276–342 (STAT…PGQY). Cys182, Cys185, Cys287, and Cys290 together coordinate Cu(+). At Thr326 the chain carries Phosphothreonine. Phosphoserine occurs at positions 338, 352, 356, and 361. HMA domains are found at residues 376 to 442 (QETV…FDAV), 478 to 544 (SKCY…FGAT), and 554 to 620 (GILK…FEAS). The Cu(+) site is built by Cys387, Cys390, Cys489, Cys492, Cys565, and Cys568. A helical membrane pass occupies residues 643-665 (SFLVSLFFCTPVMGLMMYMMAME). 2 N-linked (GlcNAc...) asparagine glycosylation sites follow: Asn674 and Asn685. The next 3 helical transmembrane spans lie at 695–717 (ILPG…QFFG), 736–760 (MDVL…VAMY), and 770–788 (SFDT…RWLE). N-linked (GlcNAc...) asparagine glycosylation is present at Asn887. Residues 930 to 952 (YFVPFIVLVSIATLLVWIIIGFQ) form a helical membrane-spanning segment. N-linked (GlcNAc...) asparagine glycosylation is present at Asn953. Residues 978 to 998 (AFQASITVLCIACPCSLGLAT) form a helical membrane-spanning segment. Asp1034 serves as the catalytic 4-aspartylphosphate intermediate. 2 N-linked (GlcNAc...) asparagine glycosylation sites follow: Asn1130 and Asn1134. A run of 2 helical transmembrane segments spans residues 1347 to 1373 (INFL…IGLV) and 1379 to 1397 (GSAA…SLFL). Phosphoserine occurs at positions 1420 and 1422. N-linked (GlcNAc...) asparagine glycosylation occurs at Asn1448. Phosphoserine is present on residues Ser1450, Ser1453, Ser1456, Ser1459, Ser1463, Ser1466, and Ser1476.

Belongs to the cation transport ATPase (P-type) (TC 3.A.3) family. As to quaternary structure, monomer. Interacts with PDZD11. Interacts with ATOX1 and COMMD1. Interacts with TYRP1. Directly interacts with SOD3; this interaction is copper-dependent and is required for SOD3 activity. In terms of tissue distribution, expressed in most tissues except liver.

The protein resides in the golgi apparatus. Its subcellular location is the trans-Golgi network membrane. It is found in the cell membrane. The enzyme catalyses Cu(+)(in) + ATP + H2O = Cu(+)(out) + ADP + phosphate + H(+). May function in the export of copper from the cytoplasm to an intracellular organelle. It may serve as well for the export of other metals. In Cricetulus griseus (Chinese hamster), this protein is Copper-transporting ATPase 1 (ATP7A).